Consider the following 316-residue polypeptide: Probable cell division protein WhiA (316 aa).

Residues 275–309 (TLKELGEMVSGGKISKSGINHRLRKIDEIAEKLRA) constitute a DNA-binding region (H-T-H motif).

It belongs to the WhiA family.

Its function is as follows. Involved in cell division and chromosome segregation. This Bacillus cereus (strain G9842) protein is Probable cell division protein WhiA.